We begin with the raw amino-acid sequence, 149 residues long: Large ribosomal subunit protein uL15 (149 aa).

The segment at 14 to 63 (ASRKRVGRGSGSGLGCTSGKGNKGQNARAGGGVRPGFEGGQMPLQRRLPK) is disordered. 2 stretches are compositionally biased toward gly residues: residues 21–35 (RGSG…GKGN) and 42–52 (AGGGVRPGFEG).

This sequence belongs to the universal ribosomal protein uL15 family. In terms of assembly, part of the 50S ribosomal subunit.

In terms of biological role, binds to the 23S rRNA. In Nitratidesulfovibrio vulgaris (strain DSM 19637 / Miyazaki F) (Desulfovibrio vulgaris), this protein is Large ribosomal subunit protein uL15.